The chain runs to 238 residues: Mannose-binding protein A (238 aa).

The first 17 residues, 1-17, serve as a signal peptide directing secretion; that stretch reads MLLLPLLVLLCVVSVSS. The segment covering 38–49 has biased composition (basic and acidic residues); the sequence is DGRDGPKGEKGE. The disordered stretch occupies residues 38–87; the sequence is DGRDGPKGEKGEPGQGLRGLQGPPGKLGPPGSVGAPGSQGPKGQKGDRGD. Residues 39-88 form the Collagen-like domain; that stretch reads GRDGPKGEKGEPGQGLRGLQGPPGKLGPPGSVGAPGSQGPKGQKGDRGDS. At P43 the chain carries 4-hydroxyproline. 5-hydroxylysine occurs at positions 44 and 47. O-linked (Gal...) hydroxylysine glycans are attached at residues K44 and K47. 4-hydroxyproline occurs at positions 50, 61, 67, 73, and 78. Residues K79 and K82 each carry the 5-hydroxylysine modification. O-linked (Gal...) hydroxylysine glycans are attached at residues K79 and K82. The C-type lectin domain occupies 143-238; that stretch reads ALCSELRGTV…SHTAVCEFPA (96 aa). Cystine bridges form between C145–C234 and C212–C226. D178, E182, E202, N204, D205, E210, D211, N222, and D223 together coordinate Ca(2+). A calcium-dependent carbohydrate binding region spans residues 202-210; sequence EPNDHGSGE.

As to quaternary structure, homotrimer. Forms higher oligomeric complexes formed by the association of two, three or more homotrimers. Oligomerization occurs in the endoplasmic reticulum. Interacts with MASP1 and MASP2. Post-translationally, hydroxylated on lysine and proline residues within the collagen-like domain. In terms of processing, O-glycosylated. O-linked glycans on hydroxylysine residues consist of Glc-Gal disaccharides bound to the oxygen atom of post-translationally added hydroxyl groups. In terms of tissue distribution, detected in blood serum (at protein level).

The protein resides in the secreted. Its function is as follows. Calcium-dependent lectin. Plays a role in the innate immune response by binding mannose, fucose and N-acetylglucosamine moieties on different microorganisms and mediating activation of the lectin complement pathway. Binds to late apoptotic cells, as well as to apoptotic blebs and to necrotic cells, but not to early apoptotic cells, facilitating their uptake by macrophages. The chain is Mannose-binding protein A (Mbl1) from Rattus norvegicus (Rat).